A 593-amino-acid polypeptide reads, in one-letter code: Immunoglobulin G-binding protein G (593 aa).

An N-terminal signal peptide occupies residues 1 to 33; the sequence is MEKEKKVKYFLRKSAFGLASVSAAFLVGSTVFA. 5 tandem repeats follow at residues 104-140, 179-215, 254-290, 303-357, and 373-427. Positions 104–290 are 3 X 37 AA repeats; that stretch reads LAKAKADALK…AKTVEGVKAL (187 aa). Residues 303-427 form a 2 X 55 AA repeats region; sequence TYKLILNGKT…DATKTFTVTE (125 aa). Residues 503–567 form a disordered region; it reads PGDAPTEPEK…TLPTTGEGSN (65 aa). The segment covering 529–557 has biased composition (basic and acidic residues); it reads AKDDAKKDDTKKEDAKKPEAKKEDAKKAE. The 5 X 5 AA repeats of [DE]-D-A-K-K stretch occupies residues 531–555; it reads DDAKKDDTKKEDAKKPEAKKEDAKK. Residues 559-563 carry the LPXTG sorting signal motif; that stretch reads LPTTG. Thr562 carries the post-translational modification Pentaglycyl murein peptidoglycan amidated threonine. Positions 563 to 593 are cleaved as a propeptide — removed by sortase; that stretch reads GEGSNPFFTAAALAVMAGAGALAVASKRKED.

It is found in the secreted. It localises to the cell wall. This chain is Immunoglobulin G-binding protein G (spg), found in Streptococcus sp. group G.